The chain runs to 977 residues: Mast/stem cell growth factor receptor Kit (977 aa).

The first 25 residues, 1–25 (MRGARGAWDFLFVLLLLLLVQTGSS), serve as a signal peptide directing secretion. Residues 26–525 (QPSVSPGELS…QIHAHTLFTP (500 aa)) are Extracellular-facing. Ig-like C2-type domains are found at residues 27–112 (PSVS…VFVR), 121–205 (DLPL…LKVR), 212–309 (PVVS…LEVV), 318–411 (PMMN…VYVN), and 414–508 (PEIL…FNFA). A disulfide bridge links cysteine 58 with cysteine 97. Residues asparagine 94, asparagine 130, and asparagine 145 are each glycosylated (N-linked (GlcNAc...) asparagine). 3 disulfides stabilise this stretch: cysteine 136–cysteine 186, cysteine 151–cysteine 183, and cysteine 233–cysteine 291. N-linked (GlcNAc...) asparagine glycosylation is found at asparagine 284, asparagine 294, asparagine 301, asparagine 321, asparagine 353, asparagine 368, asparagine 401, asparagine 464, and asparagine 487. Residues cysteine 429 and cysteine 492 are joined by a disulfide bond. A helical transmembrane segment spans residues 526–546 (LLIGFVIAAGLMCIFVMILTY). Residues 547-977 (KYLQKPMYEV…TQPLLVHEDV (431 aa)) lie on the Cytoplasmic side of the membrane. Phosphotyrosine occurs at positions 548 and 554. Tyrosine 569 lines the Mg(2+) pocket. Tyrosine 569 and tyrosine 571 each carry phosphotyrosine; by autocatalysis. Residues 569–571 (YVY) form an important for interaction with phosphotyrosine-binding proteins region. In terms of domain architecture, Protein kinase spans 590–938 (LSFGKTLGAG…ISESTNHIYS (349 aa)). ATP is bound by residues 597–604 (GAGAFGKV), lysine 624, and 672–678 (EYCCYGD). Tyrosine 704 and tyrosine 722 each carry phosphotyrosine; by autocatalysis. Position 731 is a phosphotyrosine (tyrosine 731). 2 positions are modified to phosphoserine; by PKC/PRKCA: serine 742 and serine 747. Catalysis depends on aspartate 793, which acts as the Proton acceptor. Arginine 797 provides a ligand contact to ATP. 2 residues coordinate Mg(2+): asparagine 798 and aspartate 811. Serine 822 is subject to Phosphoserine. Tyrosine 824 bears the Phosphotyrosine; by autocatalysis mark. Serine 892 is subject to Phosphoserine. Tyrosine 901 is modified (phosphotyrosine). At tyrosine 937 the chain carries Phosphotyrosine; by autocatalysis. Serine 960 bears the Phosphoserine mark.

Belongs to the protein kinase superfamily. Tyr protein kinase family. CSF-1/PDGF receptor subfamily. As to quaternary structure, monomer in the absence of bound KITLG/SCF. Homodimer in the presence of bound KITLG/SCF, forming a heterotetramer with two KITLG/SCF molecules. Interacts (via phosphorylated tyrosine residues) with the adapter proteins GRB2 and GRB7 (via SH2 domain), and SH2B2/APS. Interacts (via C-terminus) with MPDZ (via the tenth PDZ domain). Interacts (via phosphorylated tyrosine residues) with PIK3R1 and PIK3CD. Interacts (via phosphorylated tyrosine) with CRK (isoform Crk-II), FYN, SHC1 and MATK/CHK (via SH2 domain). Interacts with LYN and FES/FPS. Interacts (via phosphorylated tyrosine residues) with the protein phosphatases PTPN6/SHP-1 (via SH2 domain), PTPN11/SHP-2 (via SH2 domain) and PTPRU. Interacts with PLCG1. Interacts with DOK1 and TEC. Interacts with IL1RAP (independent of stimulation with KITLG/SCF). A mast cell-specific KITLG/SCF-induced interleukin-33 signaling complex contains IL1RL1, IL1RAP, KIT and MYD88. In terms of processing, ubiquitinated by SOCS6. KIT is rapidly ubiquitinated after autophosphorylation induced by KITLG/SCF binding, leading to internalization and degradation. Autophosphorylated on tyrosine residues. KITLG/SCF binding promotes autophosphorylation. Phosphorylated tyrosine residues are important for interaction with specific binding partners.

It localises to the cell membrane. It catalyses the reaction L-tyrosyl-[protein] + ATP = O-phospho-L-tyrosyl-[protein] + ADP + H(+). Its activity is regulated as follows. Present in an inactive conformation in the absence of bound ligand. KITLG/SCF binding leads to dimerization and activation by autophosphorylation on tyrosine residues. Activity is down-regulated by PRKCA-mediated phosphorylation on serine residues. Functionally, tyrosine-protein kinase that acts as a cell-surface receptor for the cytokine KITLG/SCF and plays an essential role in the regulation of cell survival and proliferation, hematopoiesis, stem cell maintenance, gametogenesis, mast cell development, migration and function, and in melanogenesis. In response to KITLG/SCF binding, KIT can activate several signaling pathways. Phosphorylates PIK3R1, PLCG1, SH2B2/APS and CBL. Activates the AKT1 signaling pathway by phosphorylation of PIK3R1, the regulatory subunit of phosphatidylinositol 3-kinase. Activated KIT also transmits signals via GRB2 and activation of RAS, RAF1 and the MAP kinases MAPK1/ERK2 and/or MAPK3/ERK1. Promotes activation of STAT family members STAT1, STAT3, STAT5A and STAT5B. Activation of PLCG1 leads to the production of the cellular signaling molecules diacylglycerol and inositol 1,4,5-trisphosphate. KIT signaling is modulated by protein phosphatases, and by rapid internalization and degradation of the receptor. Activated KIT promotes phosphorylation of the protein phosphatases PTPN6/SHP-1 and PTPRU, and of the transcription factors STAT1, STAT3, STAT5A and STAT5B. Promotes phosphorylation of PIK3R1, CBL, CRK (isoform Crk-II), LYN, MAPK1/ERK2 and/or MAPK3/ERK1, PLCG1, SRC and SHC1. This chain is Mast/stem cell growth factor receptor Kit (KIT), found in Bos taurus (Bovine).